Here is a 37-residue protein sequence, read N- to C-terminus: U4-theraphotoxin-Hhn1v (37 aa).

3 disulfide bridges follow: cysteine 3-cysteine 17, cysteine 7-cysteine 28, and cysteine 22-cysteine 33.

Belongs to the neurotoxin 12 (Hwtx-2) family. 02 (Hwtx-2) subfamily. In terms of tissue distribution, expressed by the venom gland.

The protein resides in the secreted. Postsynaptic neurotoxin. This Cyriopagopus hainanus (Chinese bird spider) protein is U4-theraphotoxin-Hhn1v.